We begin with the raw amino-acid sequence, 243 residues long: Octanoyltransferase (243 aa).

A BPL/LPL catalytic domain is found at 49–227; sequence PLAPQAVWLL…SLSDRFGLVW (179 aa). Residues 91 to 98, 158 to 160, and 171 to 173 each bind substrate; these read RGGEVTHH, AIG, and GLA. Cysteine 189 acts as the Acyl-thioester intermediate in catalysis.

Belongs to the LipB family.

The protein resides in the cytoplasm. The catalysed reaction is octanoyl-[ACP] + L-lysyl-[protein] = N(6)-octanoyl-L-lysyl-[protein] + holo-[ACP] + H(+). It participates in protein modification; protein lipoylation via endogenous pathway; protein N(6)-(lipoyl)lysine from octanoyl-[acyl-carrier-protein]: step 1/2. Functionally, catalyzes the transfer of endogenously produced octanoic acid from octanoyl-acyl-carrier-protein onto the lipoyl domains of lipoate-dependent enzymes. Lipoyl-ACP can also act as a substrate although octanoyl-ACP is likely to be the physiological substrate. This is Octanoyltransferase from Prochlorococcus marinus (strain MIT 9313).